The sequence spans 111 residues: Iron-sulfur cluster insertion protein ErpA (111 aa).

The iron-sulfur cluster site is built by cysteine 39, cysteine 103, and cysteine 105.

This sequence belongs to the HesB/IscA family. In terms of assembly, homodimer. Iron-sulfur cluster is required as a cofactor.

Functionally, required for insertion of 4Fe-4S clusters for at least IspG. In Buchnera aphidicola subsp. Cinara cedri (strain Cc), this protein is Iron-sulfur cluster insertion protein ErpA.